Here is a 161-residue protein sequence, read N- to C-terminus: MVIKKIIKKIRGNKDLPKPIEVPDEEYIVIGEEKPAYILEEESETESEVLGLEHKEKEEVKEVEEVVRVEKILPKLYVVRIKHPLDFENIKDKIPEYDVVIVNFEEVPFESILKELNEFRDYMSILNFKLGFVAENVLLAYRDDVILDKYVSNITDDAENV.

This is an uncharacterized protein from Methanocaldococcus jannaschii (strain ATCC 43067 / DSM 2661 / JAL-1 / JCM 10045 / NBRC 100440) (Methanococcus jannaschii).